The chain runs to 225 residues: Cytochrome b6-f complex iron-sulfur subunit, chloroplastic (225 aa).

The transit peptide at 1 to 46 directs the protein to the chloroplast; that stretch reads MASTALSTASNPTQLCRSRASLGKPVKGLGFGRERVPRTATTITCQ. Residues 69-89 form a helical membrane-spanning segment; it reads LLGAISLPTVGMLVPYGAFFI. In terms of domain architecture, Rieske spans 112-208; it reads AEEWLKTHGP…ADVDDGKVLF (97 aa). Positions 154, 156, 172, and 175 each coordinate [2Fe-2S] cluster. The cysteines at positions 159 and 174 are disulfide-linked.

This sequence belongs to the Rieske iron-sulfur protein family. As to quaternary structure, the 4 large subunits of the cytochrome b6-f complex are cytochrome b6, subunit IV (17 kDa polypeptide, petD), cytochrome f and the Rieske protein, while the 4 small subunits are petG, petL, petM and petN. The complex functions as a dimer. It depends on [2Fe-2S] cluster as a cofactor.

The protein localises to the plastid. Its subcellular location is the chloroplast thylakoid membrane. It carries out the reaction 2 oxidized [plastocyanin] + a plastoquinol + 2 H(+)(in) = 2 reduced [plastocyanin] + a plastoquinone + 4 H(+)(out). Its function is as follows. Component of the cytochrome b6-f complex, which mediates electron transfer between photosystem II (PSII) and photosystem I (PSI), cyclic electron flow around PSI, and state transitions. This chain is Cytochrome b6-f complex iron-sulfur subunit, chloroplastic (petC), found in Oryza sativa subsp. japonica (Rice).